The primary structure comprises 1833 residues: Protein TIC 214 (1833 aa).

The next 6 membrane-spanning stretches (helical) occupy residues 18-38, 67-87, 90-110, 127-147, 175-195, and 218-238; these read IINS…FSIG, FIMG…HLAL, PHTI…WNNH, LSIQ…YFIL, VGWL…LVWI, and IFSI…PSPI. The interval 254-301 is disordered; the sequence is EETNLEIEKTSETKETKQEEEGFTEEDPSPSLFSEEKEDPDKIDETEK. 2 stretches are compositionally biased toward basic and acidic residues: residues 259–273 and 292–301; these read EIEK…KQEE and DPDKIDETEK.

This sequence belongs to the TIC214 family. Part of the Tic complex.

The protein localises to the plastid. The protein resides in the chloroplast inner membrane. Functionally, involved in protein precursor import into chloroplasts. May be part of an intermediate translocation complex acting as a protein-conducting channel at the inner envelope. This chain is Protein TIC 214, found in Spinacia oleracea (Spinach).